The primary structure comprises 400 residues: NADPH dehydrogenase 1 (400 aa).

Residues threonine 38 and glutamine 115 each coordinate FMN. The substrate site is built by histidine 192 and asparagine 195. The active-site Proton donor is the tyrosine 197. Residues arginine 244 and arginine 349 each coordinate FMN. Tyrosine 376 serves as a coordination point for substrate.

In terms of assembly, homodimer or heterodimer. It depends on FMN as a cofactor.

The enzyme catalyses A + NADPH + H(+) = AH2 + NADP(+). Its function is as follows. Flavin-dependent enoate reductase that catalyzes the chemo- and stereoslective hydrogenation of electron-poor alkenes. The enzyme is reduced by NADPH, and oxygen, quinones, and alpha,beta-unsaturated aldehydes and ketones can act as electron acceptors to complete catalytic turnover. The physiological oxidant remains elusive. The chain is NADPH dehydrogenase 1 from Saccharomyces pastorianus (Lager yeast).